A 245-amino-acid polypeptide reads, in one-letter code: Probable membrane transporter protein YdhB (245 aa).

The next 8 membrane-spanning stretches (helical) occupy residues 1–21 (MLIILVMFLLGIILGFIGAGG), 34–56 (HIPIHTALGTSLAGMAFTSLSGA), 71–91 (LIVGGFAAVGSFFGAKLTSFI), 98–118 (YLTAGMLFLSAILILIRLFIL), 137–157 (ILGIAAGVLSGTFGIGSAPFI), 177–197 (MLVIIPLAVGGGIGYITEGFV), 199–219 (YVLLVKVLVGTMCGAYVGAKF), and 225–245 (KVVLKSAIFLTPAIAGLLLLF).

This sequence belongs to the 4-toluene sulfonate uptake permease (TSUP) (TC 2.A.102) family.

Its subcellular location is the cell membrane. The chain is Probable membrane transporter protein YdhB (ydhB) from Bacillus subtilis (strain 168).